Consider the following 102-residue polypeptide: U7-agatoxin-Ao1a (102 aa).

Positions 1–19 are cleaved as a signal peptide; the sequence is MTQAFFFLLLVSLVASTLS. A propeptide spanning residues 20 to 39 is cleaved from the precursor; it reads KEFNFCPRAIDEVCPVKEKR. W101 carries the post-translational modification Tryptophan amide.

The protein belongs to the venom protein 11 family. 02 (wap-2) subfamily. Contains 5 disulfide bonds. As to expression, expressed by the venom gland.

The protein localises to the secreted. In Agelena orientalis (Funnel-web spider), this protein is U7-agatoxin-Ao1a.